The primary structure comprises 507 residues: Chromosomal replication initiator protein DnaA (507 aa).

The tract at residues 1-112 is domain I, interacts with DnaA modulators; sequence MTDDPGSGFT…PATDEADDTT (112 aa). Residues 99–162 form a disordered region; sequence RIAPPATDEA…ERPRNTDSAT (64 aa). Polar residues predominate over residues 113-127; the sequence is VPPSENPATTSPDTT. The interval 113 to 166 is domain II; it reads VPPSENPATTSPDTTTDNDEIDDSAAARGDNQHSWPSYFTERPRNTDSATAGVT. The interval 167–383 is domain III, AAA+ region; the sequence is SLNRRYTFDT…GALIRVTAFA (217 aa). ATP contacts are provided by Gly-211, Gly-213, Lys-214, and Thr-215. The interval 384–507 is domain IV, binds dsDNA; sequence SLNKTPIDKA…TTRIRQRSKR (124 aa).

The protein belongs to the DnaA family. Oligomerizes as a right-handed, spiral filament on DNA at oriC.

The protein resides in the cytoplasm. In terms of biological role, plays an essential role in the initiation and regulation of chromosomal replication. ATP-DnaA binds to the origin of replication (oriC) to initiate formation of the DNA replication initiation complex once per cell cycle. Binds the DnaA box (a 9 base pair repeat at the origin) and separates the double-stranded (ds)DNA. Forms a right-handed helical filament on oriC DNA; dsDNA binds to the exterior of the filament while single-stranded (ss)DNA is stabiized in the filament's interior. The ATP-DnaA-oriC complex binds and stabilizes one strand of the AT-rich DNA unwinding element (DUE), permitting loading of DNA polymerase. After initiation quickly degrades to an ADP-DnaA complex that is not apt for DNA replication. Binds acidic phospholipids. The chain is Chromosomal replication initiator protein DnaA from Mycobacterium bovis (strain BCG / Tokyo 172 / ATCC 35737 / TMC 1019).